The primary structure comprises 388 residues: Succinate--CoA ligase [ADP-forming] subunit beta (388 aa).

Residues 9 to 244 (KDLLSSYDIA…PSQENVRDVL (236 aa)) enclose the ATP-grasp domain. ATP-binding positions include Lys-46, 53–55 (GRG), Val-102, and Glu-107. Mg(2+)-binding residues include Asn-199 and Asp-213. Residues Asn-264 and 321-323 (GIM) contribute to the substrate site.

Belongs to the succinate/malate CoA ligase beta subunit family. Heterotetramer of two alpha and two beta subunits. Mg(2+) serves as cofactor.

It catalyses the reaction succinate + ATP + CoA = succinyl-CoA + ADP + phosphate. The catalysed reaction is GTP + succinate + CoA = succinyl-CoA + GDP + phosphate. It functions in the pathway carbohydrate metabolism; tricarboxylic acid cycle; succinate from succinyl-CoA (ligase route): step 1/1. Functionally, succinyl-CoA synthetase functions in the citric acid cycle (TCA), coupling the hydrolysis of succinyl-CoA to the synthesis of either ATP or GTP and thus represents the only step of substrate-level phosphorylation in the TCA. The beta subunit provides nucleotide specificity of the enzyme and binds the substrate succinate, while the binding sites for coenzyme A and phosphate are found in the alpha subunit. The sequence is that of Succinate--CoA ligase [ADP-forming] subunit beta from Chlamydia felis (strain Fe/C-56) (Chlamydophila felis).